Reading from the N-terminus, the 327-residue chain is Glycerol-3-phosphate dehydrogenase [NAD(P)+] (327 aa).

NADPH-binding residues include phenylalanine 13, arginine 34, and lysine 107. Lysine 107 and glycine 135 together coordinate sn-glycerol 3-phosphate. NADPH is bound at residue alanine 139. Sn-glycerol 3-phosphate-binding residues include lysine 190, aspartate 243, serine 253, arginine 254, and asparagine 255. The active-site Proton acceptor is lysine 190. Arginine 254 lines the NADPH pocket. NADPH-binding residues include valine 276 and glutamate 277.

Belongs to the NAD-dependent glycerol-3-phosphate dehydrogenase family.

The protein resides in the cytoplasm. It catalyses the reaction sn-glycerol 3-phosphate + NAD(+) = dihydroxyacetone phosphate + NADH + H(+). The catalysed reaction is sn-glycerol 3-phosphate + NADP(+) = dihydroxyacetone phosphate + NADPH + H(+). The protein operates within membrane lipid metabolism; glycerophospholipid metabolism. Functionally, catalyzes the reduction of the glycolytic intermediate dihydroxyacetone phosphate (DHAP) to sn-glycerol 3-phosphate (G3P), the key precursor for phospholipid synthesis. The chain is Glycerol-3-phosphate dehydrogenase [NAD(P)+] from Rhizobium johnstonii (strain DSM 114642 / LMG 32736 / 3841) (Rhizobium leguminosarum bv. viciae).